Consider the following 758-residue polypeptide: 5-methyltetrahydropteroyltriglutamate--homocysteine methyltransferase (758 aa).

Residues 16 to 19 and lysine 112 contribute to the 5-methyltetrahydropteroyltri-L-glutamate site; that span reads RELK. L-homocysteine is bound by residues 433 to 435 and glutamate 486; that span reads IGS. L-methionine-binding positions include 433-435 and glutamate 486; that span reads IGS. 5-methyltetrahydropteroyltri-L-glutamate is bound by residues 517 to 518 and tryptophan 563; that span reads RC. Position 601 (aspartate 601) interacts with L-homocysteine. Aspartate 601 serves as a coordination point for L-methionine. Glutamate 607 is a 5-methyltetrahydropteroyltri-L-glutamate binding site. Positions 643, 645, and 667 each coordinate Zn(2+). Histidine 696 functions as the Proton donor in the catalytic mechanism. Cysteine 728 serves as a coordination point for Zn(2+).

This sequence belongs to the vitamin-B12 independent methionine synthase family. Requires Zn(2+) as cofactor.

The catalysed reaction is 5-methyltetrahydropteroyltri-L-glutamate + L-homocysteine = tetrahydropteroyltri-L-glutamate + L-methionine. It participates in amino-acid biosynthesis; L-methionine biosynthesis via de novo pathway; L-methionine from L-homocysteine (MetE route): step 1/1. In terms of biological role, catalyzes the transfer of a methyl group from 5-methyltetrahydrofolate to homocysteine resulting in methionine formation. The sequence is that of 5-methyltetrahydropteroyltriglutamate--homocysteine methyltransferase from Neisseria meningitidis serogroup C (strain 053442).